The following is a 201-amino-acid chain: Potassium-transporting ATPase KdpC subunit (201 aa).

A helical membrane pass occupies residues L17 to V37.

This sequence belongs to the KdpC family. As to quaternary structure, the system is composed of three essential subunits: KdpA, KdpB and KdpC.

It localises to the cell inner membrane. Its function is as follows. Part of the high-affinity ATP-driven potassium transport (or Kdp) system, which catalyzes the hydrolysis of ATP coupled with the electrogenic transport of potassium into the cytoplasm. This subunit acts as a catalytic chaperone that increases the ATP-binding affinity of the ATP-hydrolyzing subunit KdpB by the formation of a transient KdpB/KdpC/ATP ternary complex. The chain is Potassium-transporting ATPase KdpC subunit from Methylobacterium nodulans (strain LMG 21967 / CNCM I-2342 / ORS 2060).